The following is a 471-amino-acid chain: Putative multidrug resistance protein MdtD (471 aa).

Over 1-11 the chain is Periplasmic; that stretch reads MTDLPDSTRWQ. The chain crosses the membrane as a helical span at residues 12-32; it reads LWIVAFGFFMQSLDTTIVNTA. At 33–48 the chain is on the cytoplasmic side; it reads LPSMAQSLGESPLHMH. Residues 49-69 traverse the membrane as a helical segment; that stretch reads MVIVSYVLTVAVMLPASGWLA. Residues 70–76 are Periplasmic-facing; it reads DKVGVRN. Residues 77-97 form a helical membrane-spanning segment; that stretch reads IFFTAIVLFTLGSLFCALSGT. Topologically, residues 98–101 are cytoplasmic; that stretch reads LNEL. A helical membrane pass occupies residues 102–124; it reads LLARALQGVGGAMMVPVGRLTVM. At 125–137 the chain is on the periplasmic side; sequence KIVPREQYMAAMT. The chain crosses the membrane as a helical span at residues 138-158; that stretch reads FVTLPGQVGPLLGPALGGLLV. Topologically, residues 159-164 are cytoplasmic; it reads EYASWH. A helical membrane pass occupies residues 165-185; that stretch reads WIFLINIPVGIIGAIATLMLM. The Periplasmic portion of the chain corresponds to 186 to 196; sequence PNYTMQTRRFD. The chain crosses the membrane as a helical span at residues 197–217; sequence LSGFLLLAVGMAVLTLALDGS. Over 218–224 the chain is Cytoplasmic; sequence KGTGLSP. Residues 225 to 245 form a helical membrane-spanning segment; the sequence is LTIDGLVAVGVVALVLYLLHA. At 246–262 the chain is on the periplasmic side; sequence RNNNRALFSLKLFRTRT. Residues 263-283 form a helical membrane-spanning segment; sequence FSLGLAGSFAGRIGSGMLPFM. The Cytoplasmic segment spans residues 284–285; sequence TP. Residues 286–306 traverse the membrane as a helical segment; it reads VFLQIGLGFSPFHAGLMMIPM. Topologically, residues 307 to 341 are periplasmic; sequence VLGSMGMKRIVVQVVNRFGYRRVLVATTLGLSLVT. A helical transmembrane segment spans residues 342 to 362; it reads LLFMTTALLGWYYVLPFVLFL. Topologically, residues 363 to 395 are cytoplasmic; that stretch reads QGMVNSTRFSSMNTLTLKDLPDNLASSGNSLLS. The chain crosses the membrane as a helical span at residues 396–416; it reads MIMQLSMSIGVTIAGLLLGLF. At 417-430 the chain is on the periplasmic side; that stretch reads GSQHVSIDSGTTQT. Residues 431–451 traverse the membrane as a helical segment; that stretch reads VFMYTWLSMALIIALPAFIFA. Residues 452-471 are Cytoplasmic-facing; the sequence is RVPNDTHQNVAISRRKRSAQ.

It belongs to the major facilitator superfamily. TCR/Tet family.

The protein resides in the cell inner membrane. The sequence is that of Putative multidrug resistance protein MdtD from Escherichia coli (strain SE11).